Consider the following 78-residue polypeptide: Acyl carrier protein (78 aa).

In terms of domain architecture, Carrier spans 2–77 (STIEERVKKI…AAIDYVNAHQ (76 aa)). Ser37 carries the O-(pantetheine 4'-phosphoryl)serine modification.

This sequence belongs to the acyl carrier protein (ACP) family. 4'-phosphopantetheine is transferred from CoA to a specific serine of apo-ACP by AcpS. This modification is essential for activity because fatty acids are bound in thioester linkage to the sulfhydryl of the prosthetic group.

It localises to the cytoplasm. The protein operates within lipid metabolism; fatty acid biosynthesis. Its function is as follows. Carrier of the growing fatty acid chain in fatty acid biosynthesis. The sequence is that of Acyl carrier protein from Pseudomonas entomophila (strain L48).